The chain runs to 384 residues: Probable inactive patatin-like protein 9 (384 aa).

A PNPLA domain is found at 33 to 234 (LSIDGGGTTG…VMNNPTAAAV (202 aa)). The GXGXXG signature appears at 37-42 (GGGTTG). Residue Asp221 is the Proton acceptor of the active site. A DGA/G motif is present at residues 221 to 223 (DGG). Residues 363–384 (GKSSLPPSPCKESAVNPLADGR) are disordered.

Belongs to the patatin family. As to expression, highly expressed in roots and at lower levels in flowers and siliques.

This Arabidopsis thaliana (Mouse-ear cress) protein is Probable inactive patatin-like protein 9 (PLP9).